The sequence spans 150 residues: Large ribosomal subunit protein bL9 (150 aa).

The protein belongs to the bacterial ribosomal protein bL9 family.

Functionally, binds to the 23S rRNA. The sequence is that of Large ribosomal subunit protein bL9 from Pectobacterium atrosepticum (strain SCRI 1043 / ATCC BAA-672) (Erwinia carotovora subsp. atroseptica).